The chain runs to 71 residues: UPF0337 protein RPA4418 (71 aa).

The interval 1-54 (MGSTMDKIKGQANELAGKAKQGIGEATGSDKLKGEGAIQEAKGHGQQALGNAKD) is disordered.

Belongs to the UPF0337 (CsbD) family.

This Rhodopseudomonas palustris (strain ATCC BAA-98 / CGA009) protein is UPF0337 protein RPA4418.